We begin with the raw amino-acid sequence, 1077 residues long: Error-prone DNA polymerase (1077 aa).

Belongs to the DNA polymerase type-C family. DnaE2 subfamily.

The protein localises to the cytoplasm. The enzyme catalyses DNA(n) + a 2'-deoxyribonucleoside 5'-triphosphate = DNA(n+1) + diphosphate. Functionally, DNA polymerase involved in damage-induced mutagenesis and translesion synthesis (TLS). It is not the major replicative DNA polymerase. This chain is Error-prone DNA polymerase, found in Brucella abortus biovar 1 (strain 9-941).